We begin with the raw amino-acid sequence, 950 residues long: General transcription factor II-I repeat domain-containing protein 2 (950 aa).

2 GTF2I-like repeats span residues 100 to 194 (QVDS…QPGG) and 324 to 418 (LSSL…SNVG).

The protein belongs to the TFII-I family.

The protein localises to the nucleus. The polypeptide is General transcription factor II-I repeat domain-containing protein 2 (GTF2IRD2) (Bos taurus (Bovine)).